Reading from the N-terminus, the 540-residue chain is Chaperonin GroEL (540 aa).

Residues 29-32 (TIGP), 86-90 (DGTTT), G413, 476-478 (NAA), and D492 contribute to the ATP site.

Belongs to the chaperonin (HSP60) family. As to quaternary structure, forms a cylinder of 14 subunits composed of two heptameric rings stacked back-to-back. Interacts with the co-chaperonin GroES.

Its subcellular location is the cytoplasm. It carries out the reaction ATP + H2O + a folded polypeptide = ADP + phosphate + an unfolded polypeptide.. Its function is as follows. Together with its co-chaperonin GroES, plays an essential role in assisting protein folding. The GroEL-GroES system forms a nano-cage that allows encapsulation of the non-native substrate proteins and provides a physical environment optimized to promote and accelerate protein folding. The protein is Chaperonin GroEL of Staphylococcus carnosus (strain TM300).